Here is a 424-residue protein sequence, read N- to C-terminus: Glutamyl-tRNA reductase (424 aa).

Residues 53–56, Ser-111, 116–118, and Gln-122 each bind substrate; these read TCNR and EPQ. Cys-54 serves as the catalytic Nucleophile. Position 191-196 (191-196) interacts with NADP(+); that stretch reads GAGEMI.

This sequence belongs to the glutamyl-tRNA reductase family. Homodimer.

It catalyses the reaction (S)-4-amino-5-oxopentanoate + tRNA(Glu) + NADP(+) = L-glutamyl-tRNA(Glu) + NADPH + H(+). It participates in porphyrin-containing compound metabolism; protoporphyrin-IX biosynthesis; 5-aminolevulinate from L-glutamyl-tRNA(Glu): step 1/2. Catalyzes the NADPH-dependent reduction of glutamyl-tRNA(Glu) to glutamate 1-semialdehyde (GSA). In Bordetella avium (strain 197N), this protein is Glutamyl-tRNA reductase.